A 443-amino-acid chain; its full sequence is MVRGRISRLSVRDVRFPTSLGGHGADAMHTDPDYSAAYVVIETDAEDGIKGCGITFTLGKGTEVVVCAVNALAHHVLNKDLKDIVGDFRGFYRQLTSDGQLRWIGPEKGVVHLATAAVLNAVWDLWAKQEGKPVWKLLVDMDPRMLVSCIDFRYITDVLTEEDALEILQKGQIGKKEREKQMLAQGYPAYTTSCAWLGYSDDTLKQLCAQALKDGWTRFKVKVGADLQDDMRRCQIIRDMIGPEKTLMMDANQRWDVPEAVEWMSKLAKFKPLWIEEPTSPDDILGHATISKALVPLGIGIATGEQCHNRVIFKQLLQAKALQFLQIDSCRLGSVNENLSVLLMAKKFEIPVCPHAGGVGLCELVQHLIIFDYISVSASLENRVCEYVDHLHEHFKYPVMIQRASYMPPKDPGYSTEMKEESVKKHQYPDGEVWKKLLPAQEN.

Residues 24–26 (GAD) and Tyr34 each bind substrate. Ser148 bears the Phosphoserine mark. Lys220 contributes to the substrate binding site. Lys222 serves as the catalytic Proton donor/acceptor. Asp250 contributes to the Mg(2+) binding site. Substrate contacts are provided by residues Asn252, Glu276, Glu305, 355 to 357 (HAG), and Glu386. Mg(2+) is bound by residues Glu276 and Glu305. His355 is an active-site residue.

This sequence belongs to the mandelate racemase/muconate lactonizing enzyme family. ENOSF1 subfamily. Mg(2+) serves as cofactor. Could be sumoylated.

It is found in the mitochondrion. It catalyses the reaction L-fuconate = 2-dehydro-3-deoxy-L-fuconate + H2O. Plays a role in the catabolism of L-fucose, a sugar that is part of the carbohydrates that are attached to cellular glycoproteins. Catalyzes the dehydration of L-fuconate to 2-keto-3-deoxy-L-fuconate by the abstraction of the 2-proton to generate an enediolate intermediate that is stabilized by the magnesium ion. This chain is Mitochondrial enolase superfamily member 1 (ENOSF1), found in Homo sapiens (Human).